Here is a 157-residue protein sequence, read N- to C-terminus: MNINATLFGQMVTFALLVWFTMKYVWPPLLQALEERKKKIAEGLAAAEKGKHEMELAEKRATAALKEAKDQAAEIVNQAQKRANALVDESKEAAKIEGERILANARSEIDRELENAKEELRKQVSALAISAAEKILQREVDQKKHKEILAGLGKQLG.

A helical membrane pass occupies residues 7–29 (LFGQMVTFALLVWFTMKYVWPPL).

It belongs to the ATPase B chain family. As to quaternary structure, F-type ATPases have 2 components, F(1) - the catalytic core - and F(0) - the membrane proton channel. F(1) has five subunits: alpha(3), beta(3), gamma(1), delta(1), epsilon(1). F(0) has three main subunits: a(1), b(2) and c(10-14). The alpha and beta chains form an alternating ring which encloses part of the gamma chain. F(1) is attached to F(0) by a central stalk formed by the gamma and epsilon chains, while a peripheral stalk is formed by the delta and b chains.

The protein localises to the cell inner membrane. Functionally, f(1)F(0) ATP synthase produces ATP from ADP in the presence of a proton or sodium gradient. F-type ATPases consist of two structural domains, F(1) containing the extramembraneous catalytic core and F(0) containing the membrane proton channel, linked together by a central stalk and a peripheral stalk. During catalysis, ATP synthesis in the catalytic domain of F(1) is coupled via a rotary mechanism of the central stalk subunits to proton translocation. Its function is as follows. Component of the F(0) channel, it forms part of the peripheral stalk, linking F(1) to F(0). This Methylococcus capsulatus (strain ATCC 33009 / NCIMB 11132 / Bath) protein is ATP synthase subunit b 1.